A 272-amino-acid polypeptide reads, in one-letter code: Deaminated glutathione amidase (272 aa).

One can recognise a CN hydrolase domain in the interval 1–253; that stretch reads MKPYLAAALQ…PGLAIAEINP (253 aa). Glutamate 43 acts as the Proton acceptor in catalysis. The active-site Proton donor is lysine 115. The active-site Nucleophile is the cysteine 158.

The protein belongs to the carbon-nitrogen hydrolase superfamily. NIT1/NIT2 family.

The catalysed reaction is N-(4-oxoglutaryl)-L-cysteinylglycine + H2O = L-cysteinylglycine + 2-oxoglutarate. Its function is as follows. Hydrolyzes deaminated glutathione (dGSH, 2-oxoglutaramate) to alpha-ketoglutarate (alpha-KG) and cysteinylglycine (specific activity 7.77 umol/min/mg), hydrolyzes alpha-ketoglutaramate (a-KGM, specific activity 2.13 umol/min/mg), has no activity on glutathione or L-glutamine. May function as a metabolite repair enzyme. This is Deaminated glutathione amidase from Synechocystis sp. (strain PCC 6803 / GT-S).